Consider the following 5099-residue polypeptide: Malformin synthetase mlfA (5099 aa).

The adenylation 1 stretch occupies residues 224–615 (QRHAADRPHS…CGRADTQVKL (392 aa)). The Carrier 1 domain maps to 756–829 (THLENEIQLA…EAASLAKVRD (74 aa)). The residue at position 790 (Ser-790) is an O-(pantetheine 4'-phosphoryl)serine. Residues 867-1297 (EDVFPCTSMQ…PVDSLTLLKP (431 aa)) are condensation 1. The adenylation 2 stretch occupies residues 1325-1717 (DRWVNRQPDT…GRKDTQVKLR (393 aa)). The Carrier 2 domain maps to 1857–1934 (ARAPELERTL…QIATQCEGIA (78 aa)). An O-(pantetheine 4'-phosphoryl)serine modification is found at Ser-1894. The interval 1995-2040 (MQQESSSSPAPSVSSSSSSSSAPKPLLAQPEPPTNLRDSVPEPFSL) is disordered. Residues 1999-2017 (SSSSPAPSVSSSSSSSSAP) show a composition bias toward low complexity. Positions 2067-2482 (EDIYPATPLQ…ALSPGDKKVL (416 aa)) are condensation 2. Residues 2505–2897 (LSTPHAPAVC…VGRKDGQLKL (393 aa)) form an adenylation 3 region. The Carrier 3 domain maps to 3032-3108 (RPATAQERGL…RLVLHLQNTS (77 aa)). Ser-3069 carries the O-(pantetheine 4'-phosphoryl)serine modification. 2 condensation regions span residues 3125-3589 (WVHL…TYDQ) and 3610-4033 (DIYP…QQAM). Residues 4058–4446 (YANREAVCAW…VGRKDSQIKF (389 aa)) form an adenylation 4 region. A Carrier 4 domain is found at 4581 to 4657 (PPSTGMQQGI…DLAEHISSRV (77 aa)). An O-(pantetheine 4'-phosphoryl)serine modification is found at Ser-4618. A condensation 5 region spans residues 4696–5017 (DILPTTGFQR…LQTVVQHQNV (322 aa)).

It belongs to the NRP synthetase family.

Its pathway is secondary metabolite biosynthesis. In terms of biological role, nonribosomal peptide synthetase; part of the gene cluster that mediates the biosynthesis of malformins, cyclic pentapeptides with a disulfide bond between 2 consecutive cysteins, that show potential anti-tumor as well as antimalarial and antitrypanosomal properties. The nonribosomal peptide synthetase mlfA is responsible of the formation of the cyclic pentapeptide. The malformin biosynthesis clusters in malformin-producing fungi also contain enzymes involved in the formation of the disulfide bond between the two consecutive cysteins within malformins, in addition to additional tailoring enzymes such as methyltransferases or oxidoreductases. They are also composed of up to 4 major facilitator superfamily transporters, and transcription factors probably involved in the regulation of the expression of those clusters. This chain is Malformin synthetase mlfA, found in Aspergillus sclerotiicarbonarius (strain CBS 121057 / IBT 28362).